A 208-amino-acid polypeptide reads, in one-letter code: N-(5'-phosphoribosyl)anthranilate isomerase (208 aa).

Belongs to the TrpF family.

The catalysed reaction is N-(5-phospho-beta-D-ribosyl)anthranilate = 1-(2-carboxyphenylamino)-1-deoxy-D-ribulose 5-phosphate. Its pathway is amino-acid biosynthesis; L-tryptophan biosynthesis; L-tryptophan from chorismate: step 3/5. This chain is N-(5'-phosphoribosyl)anthranilate isomerase, found in Neisseria meningitidis serogroup B (strain ATCC BAA-335 / MC58).